A 199-amino-acid polypeptide reads, in one-letter code: N-(5'-phosphoribosyl)anthranilate isomerase (199 aa).

The protein belongs to the TrpF family.

The enzyme catalyses N-(5-phospho-beta-D-ribosyl)anthranilate = 1-(2-carboxyphenylamino)-1-deoxy-D-ribulose 5-phosphate. It participates in amino-acid biosynthesis; L-tryptophan biosynthesis; L-tryptophan from chorismate: step 3/5. In Campylobacter jejuni subsp. jejuni serotype O:6 (strain 81116 / NCTC 11828), this protein is N-(5'-phosphoribosyl)anthranilate isomerase.